The sequence spans 796 residues: Nuclear GTPase SLIP-GC (796 aa).

107-114 serves as a coordination point for GTP; sequence GITGAGKS. Coiled-coil stretches lie at residues 158–185 and 742–776; these read SDQE…EEAD and GLCK…LRRS.

The protein resides in the nucleus speckle. Its function is as follows. Nuclear GTPase found in germinal center B-cells, where it may inhibit function of the activation-induced cytidine deaminase AICDA. Reduces somatic hypermutation in B-cells which may enhance genome stability. In Mus musculus (Mouse), this protein is Nuclear GTPase SLIP-GC.